The following is a 525-amino-acid chain: MPITSNEISVEVNGQVYTLPAGSTLGDALKVSRAPYIAGAAIGILKKAAEKRTEKITEYAINTPKGELRIEIKDPESTSGKLWAEHYKEYEGKDIHWESPEALAFGPFEADIKPSRETGNFEAFDVLFGAGGFDPHNTHLILSRKRHSAEYGSPDDGVFASIVTGRKIISKISKEDSILSIEPVIEWERITEKTCTTDLSTPLEDEDSVYTYFEVELSRNAPVGAEHFYALTREGTLKVDAVTSSFISDDSLREVPAPYENFEQRREGAISVRTVGYGTGRIYISREERPSSLVHSVVGQVTKGLELIKLAEKGQKLSVESLPPQIVLLGHSFEEVEPLLSSIGVELIKEGYAGENSVIVRQEPPTTLEILGEAKVKAYAVARTKLIEVELYTEIAPKSIDFFRHALDLKTKTVGKLPVHMIYETTYLFKTEKEMVKYKEILPENTPEKKVLAGEIGITNQAAKRMGTIGVRLIDDDLFGPTGEKFSSTNIIGRIVEPDRLKGIKEGDAIYITEVARKENGGQKN.

It belongs to the UPF0288 family.

In Methanosarcina mazei (strain ATCC BAA-159 / DSM 3647 / Goe1 / Go1 / JCM 11833 / OCM 88) (Methanosarcina frisia), this protein is UPF0288 protein MM_0912.